Reading from the N-terminus, the 198-residue chain is Probable molybdenum cofactor guanylyltransferase (198 aa).

GTP-binding positions include 9-11 (LAG), Lys-22, Asp-66, and Asp-95. A Mg(2+)-binding site is contributed by Asp-95.

Belongs to the MobA family. The cofactor is Mg(2+).

It localises to the cytoplasm. The enzyme catalyses Mo-molybdopterin + GTP + H(+) = Mo-molybdopterin guanine dinucleotide + diphosphate. Its function is as follows. Transfers a GMP moiety from GTP to Mo-molybdopterin (Mo-MPT) cofactor (Moco or molybdenum cofactor) to form Mo-molybdopterin guanine dinucleotide (Mo-MGD) cofactor. This is Probable molybdenum cofactor guanylyltransferase from Clostridium perfringens (strain 13 / Type A).